A 206-amino-acid chain; its full sequence is Ribosomal RNA large subunit methyltransferase E (206 aa).

S-adenosyl-L-methionine contacts are provided by Gly60, Trp62, Asp80, Asp96, and Asp121. The active-site Proton acceptor is Lys161.

The protein belongs to the class I-like SAM-binding methyltransferase superfamily. RNA methyltransferase RlmE family.

It is found in the cytoplasm. The enzyme catalyses uridine(2552) in 23S rRNA + S-adenosyl-L-methionine = 2'-O-methyluridine(2552) in 23S rRNA + S-adenosyl-L-homocysteine + H(+). Specifically methylates the uridine in position 2552 of 23S rRNA at the 2'-O position of the ribose in the fully assembled 50S ribosomal subunit. The chain is Ribosomal RNA large subunit methyltransferase E from Nitrosomonas eutropha (strain DSM 101675 / C91 / Nm57).